Here is a 417-residue protein sequence, read N- to C-terminus: Sterile alpha motif domain-containing protein 14 (417 aa).

2 disordered regions span residues 37 to 299 (LLAK…WQEA) and 388 to 417 (AAAE…AKKS). Over residues 40-49 (KGRRHRPSRS) the composition is skewed to basic residues. Phosphoserine is present on residues S84 and S108. Over residues 135–153 (AAASCSPPRSAPSSDSSPS) the composition is skewed to low complexity. A compositionally biased stretch (basic and acidic residues) spans 160–173 (RAEPHSEDDSRDAS). S173 and S179 each carry phosphoserine. Low complexity-rich tracts occupy residues 244–260 (SGKG…PTCS) and 276–295 (STLS…PSGP). S279 is modified (phosphoserine). T283 is modified (phosphothreonine). Residues 326–389 (WTSQQVGQWL…KRKLKEMAAA (64 aa)) enclose the SAM domain. Positions 377–417 (ALVKRKLKEMAAAAEKERKAQEKAARQREKLRRREQEAKKS) form a coiled coil. A compositionally biased stretch (basic and acidic residues) spans 390–417 (AEKERKAQEKAARQREKLRRREQEAKKS).

The protein is Sterile alpha motif domain-containing protein 14 (SAMD14) of Homo sapiens (Human).